Consider the following 216-residue polypeptide: MTKKYSLGFVGRKAGMSRVFTEDGRSVPVTLIEATPNRIAQIKTVEVDGYSAVQITVGARRAALVNKPAAGHFAKAKVEAGRGLWEFRVEDAQLGDFAVGGEIKADIFEVGQKVDVQGVTKGKGFQGTIKRYNFRMGDATHGNSLSHRAPGSLGQRQTPGRVFPGKKMSGHMGAVQQSTQNLEVVKVDVERGLIAIRGAVPGAAGGDVIVRPASKA.

Q157 is modified (N5-methylglutamine).

It belongs to the universal ribosomal protein uL3 family. Part of the 50S ribosomal subunit. Forms a cluster with proteins L14 and L19. Post-translationally, methylated by PrmB.

Its function is as follows. One of the primary rRNA binding proteins, it binds directly near the 3'-end of the 23S rRNA, where it nucleates assembly of the 50S subunit. The chain is Large ribosomal subunit protein uL3 from Xanthomonas campestris pv. campestris (strain 8004).